Here is a 197-residue protein sequence, read N- to C-terminus: Probable nicotinate-nucleotide adenylyltransferase (197 aa).

Belongs to the NadD family.

The catalysed reaction is nicotinate beta-D-ribonucleotide + ATP + H(+) = deamido-NAD(+) + diphosphate. It functions in the pathway cofactor biosynthesis; NAD(+) biosynthesis; deamido-NAD(+) from nicotinate D-ribonucleotide: step 1/1. In terms of biological role, catalyzes the reversible adenylation of nicotinate mononucleotide (NaMN) to nicotinic acid adenine dinucleotide (NaAD). The chain is Probable nicotinate-nucleotide adenylyltransferase from Thermosipho melanesiensis (strain DSM 12029 / CIP 104789 / BI429).